A 257-amino-acid chain; its full sequence is NAD-capped RNA hydrolase NudC (257 aa).

Lys-25 and Arg-69 together coordinate substrate. Residues Cys-98 and Cys-101 each coordinate Zn(2+). Residue Glu-111 participates in substrate binding. Positions 116 and 119 each coordinate Zn(2+). Tyr-124 provides a ligand contact to substrate. A Nudix hydrolase domain is found at 125–248 (PQIAPCIIVA…TVARRLIEDT (124 aa)). A divalent metal cation contacts are provided by Ala-158, Glu-174, and Glu-178. Positions 159 to 180 (GFVEVGETLEQAVAREVMEESG) match the Nudix box motif. Substrate is bound at residue 192–199 (QPWPFPQS). An a divalent metal cation-binding site is contributed by Glu-219. Residue Ala-241 participates in substrate binding.

Belongs to the Nudix hydrolase family. NudC subfamily. In terms of assembly, homodimer. The cofactor is Mg(2+). Requires Mn(2+) as cofactor. Zn(2+) is required as a cofactor.

The catalysed reaction is a 5'-end NAD(+)-phospho-ribonucleoside in mRNA + H2O = a 5'-end phospho-adenosine-phospho-ribonucleoside in mRNA + beta-nicotinamide D-ribonucleotide + 2 H(+). It catalyses the reaction NAD(+) + H2O = beta-nicotinamide D-ribonucleotide + AMP + 2 H(+). It carries out the reaction NADH + H2O = reduced beta-nicotinamide D-ribonucleotide + AMP + 2 H(+). In terms of biological role, mRNA decapping enzyme that specifically removes the nicotinamide adenine dinucleotide (NAD) cap from a subset of mRNAs by hydrolyzing the diphosphate linkage to produce nicotinamide mononucleotide (NMN) and 5' monophosphate mRNA. The NAD-cap is present at the 5'-end of some mRNAs and stabilizes RNA against 5'-processing. Has preference for mRNAs with a 5'-end purine. Catalyzes the hydrolysis of a broad range of dinucleotide pyrophosphates. The protein is NAD-capped RNA hydrolase NudC of Shigella dysenteriae serotype 1 (strain Sd197).